Reading from the N-terminus, the 218-residue chain is Zinc finger BED domain-containing protein 2 (218 aa).

The span at 1 to 11 shows a compositional bias: acidic residues; that stretch reads MMRREDEEEEG. Residues 1-24 are disordered; that stretch reads MMRREDEEEEGTMMKAKGDLEMKE. The BED-type zinc-finger motif lies at 52–113; it reads TRFSEAWEYF…SMHREELEKS (62 aa). Zn(2+)-binding residues include Cys78, Cys81, His101, and His106. Residues 104–137 are disordered; that stretch reads SMHREELEKSGHGQAGQRQDPRPHGPQLPTGIEG. Residues 105–114 show a composition bias toward basic and acidic residues; sequence MHREELEKSG.

In terms of tissue distribution, expressed in keratinocytes.

The protein resides in the nucleus. Functionally, transcriptional regulator which has intrinsic repressor activity and which competes with the transcriptional activator IRF1 for binding to the 5'-[CA]GAA[AC]C[CT]-3' consensus sequence in gene promoters. May thereby play a role in keratinocyte differentiation. This chain is Zinc finger BED domain-containing protein 2 (ZBED2), found in Homo sapiens (Human).